Reading from the N-terminus, the 81-residue chain is Photosystem I iron-sulfur center (81 aa).

2 consecutive 4Fe-4S ferredoxin-type domains span residues 2–31 and 39–68; these read SHSV…MIPW and IASA…VRVY. 8 residues coordinate [4Fe-4S] cluster: Cys11, Cys14, Cys17, Cys21, Cys48, Cys51, Cys54, and Cys58.

In terms of assembly, the eukaryotic PSI reaction center is composed of at least 11 subunits. The cofactor is [4Fe-4S] cluster.

It is found in the plastid. It localises to the chloroplast thylakoid membrane. The enzyme catalyses reduced [plastocyanin] + hnu + oxidized [2Fe-2S]-[ferredoxin] = oxidized [plastocyanin] + reduced [2Fe-2S]-[ferredoxin]. In terms of biological role, apoprotein for the two 4Fe-4S centers FA and FB of photosystem I (PSI); essential for photochemical activity. FB is the terminal electron acceptor of PSI, donating electrons to ferredoxin. The C-terminus interacts with PsaA/B/D and helps assemble the protein into the PSI complex. Required for binding of PsaD and PsaE to PSI. PSI is a plastocyanin-ferredoxin oxidoreductase, converting photonic excitation into a charge separation, which transfers an electron from the donor P700 chlorophyll pair to the spectroscopically characterized acceptors A0, A1, FX, FA and FB in turn. In Sorghum bicolor (Sorghum), this protein is Photosystem I iron-sulfur center.